The following is a 303-amino-acid chain: Thioesterase poxG (303 aa).

This sequence belongs to the lcsJ thioesterase family.

It participates in secondary metabolite biosynthesis. In terms of biological role, thioesterase; part of the gene cluster that mediates the biosynthesis of oxaleimides, cytotoxic compounds containing an unusual disubstituted succinimide moiety. The first step of the pathway is provided by the HR-PKS poxF that serves in a new mode of collaborative biosynthesis with the PKS-NRPS poxE, by providing the olefin containing amino acid substrate via the synthesis of an ACP-bound dec-4-enoate. The cytochrome P450 monooxygenase poxM-catalyzed oxidation at the alpha-position creates the enzyme-bound 2-hydroxydec-4-enoyl-ACP thioester, which may be prone to spontaneous hydrolysis to yield 2-hydroxydec-4-enoic acid due to increased electrophilicity of the carbonyl. 2-hydroxydec-4-enoic acid can then be further oxidized by poxM to yield the alpha-ketoacid 2-oxodec-4-enoicacid, which is reductively aminated by the aminotransferase poxL to yield (S,E)-2-aminodec-4-enoic acid. The Hybrid PKS-NRPS synthetase poxE then performs condensation between the octaketide product of its PKS modules and the amino group of (S,E)-2-aminodec-4-enoic acid which is activated and incorporated by the adenylation domain. The resulting aminoacyl product can be cyclized by the Diels-Alderase PoxQ and reductively released by the reductive (R) domain of poxE to yield an aldehyde intermediate. The released aldehyde is then substrate for a Knoevenagel condensation by the hydrolyase poxO followed by an oxidation at the 5-position of the pyrrolidone ring. The presence of the olefin from the amino acid building block allows for migration of the substituted allyl group to occur. This allylic transposition reaction takes place in a conjugate addition, semipinacol-like fashion to yield a succinimide intermediate. Iterative two-electron oxidations of the C7 methyl of the succinimide intermediate to the carboxylic acid can be catalyzed by one of two remaining cytochrome P450 monooxygenasess poxC or poxD to yield oxaleimide A. Subsequent oxidation yields the maleimide scaffold oxaleimide I. Both oxaleimide A and oxaleimide I can undergo oxidative modifications in the decalin ring to yield the series of products oxaleimides B to H. This chain is Thioesterase poxG, found in Penicillium oxalicum.